We begin with the raw amino-acid sequence, 457 residues long: Argininosuccinate lyase (457 aa).

It belongs to the lyase 1 family. Argininosuccinate lyase subfamily.

The protein resides in the cytoplasm. It catalyses the reaction 2-(N(omega)-L-arginino)succinate = fumarate + L-arginine. It functions in the pathway amino-acid biosynthesis; L-arginine biosynthesis; L-arginine from L-ornithine and carbamoyl phosphate: step 3/3. This is Argininosuccinate lyase from Yersinia pseudotuberculosis serotype IB (strain PB1/+).